A 253-amino-acid polypeptide reads, in one-letter code: Large ribosomal subunit protein uL1m (253 aa).

The transit peptide at Met-1–Ala-81 directs the protein to the mitochondrion.

It belongs to the universal ribosomal protein uL1 family. As to quaternary structure, component of the mitochondrial large ribosomal subunit (mt-LSU). Mature yeast 74S mitochondrial ribosomes consist of a small (37S) and a large (54S) subunit. The 37S small subunit contains a 15S ribosomal RNA (15S mt-rRNA) and at least 32 different proteins. The 54S large subunit contains a 21S rRNA (21S mt-rRNA) and at least 45 different proteins.

The protein localises to the mitochondrion. In terms of biological role, component of the mitochondrial ribosome (mitoribosome), a dedicated translation machinery responsible for the synthesis of mitochondrial genome-encoded proteins, including at least some of the essential transmembrane subunits of the mitochondrial respiratory chain. The mitoribosomes are attached to the mitochondrial inner membrane and translation products are cotranslationally integrated into the membrane. This Schizosaccharomyces pombe (strain 972 / ATCC 24843) (Fission yeast) protein is Large ribosomal subunit protein uL1m (mrpl1).